Consider the following 752-residue polypeptide: DNA ligase (752 aa).

A disordered region spans residues 1–25; it reads MKRNGFVPSNSVGRRGIPSNSTSSA. NAD(+) contacts are provided by residues 91 to 95, 140 to 141, and E170; these read DADFD and SL. The N6-AMP-lysine intermediate role is filled by K172. R193, E233, K350, and K374 together coordinate NAD(+). Residues C474, C477, C493, and C499 each contribute to the Zn(2+) site. Residues 669 to 752 enclose the BRCT domain; it reads STPRTLAGLT…TLLDGGPAAL (84 aa).

The protein belongs to the NAD-dependent DNA ligase family. LigA subfamily. It depends on Mg(2+) as a cofactor. Requires Mn(2+) as cofactor.

It carries out the reaction NAD(+) + (deoxyribonucleotide)n-3'-hydroxyl + 5'-phospho-(deoxyribonucleotide)m = (deoxyribonucleotide)n+m + AMP + beta-nicotinamide D-nucleotide.. Functionally, DNA ligase that catalyzes the formation of phosphodiester linkages between 5'-phosphoryl and 3'-hydroxyl groups in double-stranded DNA using NAD as a coenzyme and as the energy source for the reaction. It is essential for DNA replication and repair of damaged DNA. The sequence is that of DNA ligase from Nocardioides sp. (strain ATCC BAA-499 / JS614).